Consider the following 161-residue polypeptide: Vitamin K epoxide reductase complex subunit 1 (161 aa).

Topologically, residues 1–9 (MGTTWRSPG) are cytoplasmic. The chain crosses the membrane as a helical span at residues 10–29 (LVRLALCLAGLALSLYALHV). Over 30–80 (KAARARDENYRALCDVGTAISCSRVFSSRWGRGFGLVEHMLGADSVLNQSN) the chain is Lumenal. Cys43 and Cys51 are oxidised to a cystine. Asn80 provides a ligand contact to (S)-warfarin. The chain crosses the membrane as a helical span at residues 81 to 95 (SIFGCLFYTLQLLLG). Topologically, residues 96–100 (CLRGR) are cytoplasmic. The chain crosses the membrane as a helical span at residues 101 to 128 (WASILLVLSSLVSVAGSVYLAWILFFVL). The Lumenal portion of the chain corresponds to 129-131 (YDF). Cys132 and Cys135 are oxidised to a cystine. Residues 132 to 153 (CIVCITTYAINVGLMLLSFQKV) form a helical membrane-spanning segment. Cys135 and Tyr139 together coordinate phylloquinone. A (S)-warfarin-binding site is contributed by Tyr139. Residues 154–161 (PEHKTKKH) lie on the Cytoplasmic side of the membrane.

This sequence belongs to the VKOR family. In terms of tissue distribution, detected in liver.

The protein resides in the endoplasmic reticulum membrane. The catalysed reaction is phylloquinone + [protein]-disulfide + H2O = 2,3-epoxyphylloquinone + [protein]-dithiol. It carries out the reaction phylloquinol + [protein]-disulfide = phylloquinone + [protein]-dithiol. Its activity is regulated as follows. Inhibited by warfarin (coumadin). Warfarin locks VKORC1 in both redox states into the closed conformation. In terms of biological role, involved in vitamin K metabolism. Catalytic subunit of the vitamin K epoxide reductase (VKOR) complex which reduces inactive vitamin K 2,3-epoxide to active vitamin K. Vitamin K is required for the gamma-carboxylation of various proteins, including clotting factors, and is required for normal blood coagulation, but also for normal bone development. In Mus musculus (Mouse), this protein is Vitamin K epoxide reductase complex subunit 1 (Vkorc1).